Here is a 192-residue protein sequence, read N- to C-terminus: Peptide deformylase 1 (192 aa).

C101 and H143 together coordinate Fe cation. The active site involves E144. H147 contacts Fe cation.

Belongs to the polypeptide deformylase family. Fe(2+) is required as a cofactor.

It carries out the reaction N-terminal N-formyl-L-methionyl-[peptide] + H2O = N-terminal L-methionyl-[peptide] + formate. Its function is as follows. Removes the formyl group from the N-terminal Met of newly synthesized proteins. Requires at least a dipeptide for an efficient rate of reaction. N-terminal L-methionine is a prerequisite for activity but the enzyme has broad specificity at other positions. The chain is Peptide deformylase 1 from Prochlorococcus marinus (strain MIT 9313).